Here is a 331-residue protein sequence, read N- to C-terminus: Protoheme IX farnesyltransferase (331 aa).

Transmembrane regions (helical) follow at residues 63-83, 109-129, 132-152, 160-180, 188-208, 215-235, 241-261, and 294-314; these read LACT…LNCL, SVFI…VSGV, LAAG…TAFL, IVFG…AAAG, WLFS…AILL, VGIP…AISV, VFLS…YGIL, and ILYM…VSIV.

Belongs to the UbiA prenyltransferase family. Protoheme IX farnesyltransferase subfamily.

It localises to the cell inner membrane. The catalysed reaction is heme b + (2E,6E)-farnesyl diphosphate + H2O = Fe(II)-heme o + diphosphate. It participates in porphyrin-containing compound metabolism; heme O biosynthesis; heme O from protoheme: step 1/1. Functionally, converts heme B (protoheme IX) to heme O by substitution of the vinyl group on carbon 2 of heme B porphyrin ring with a hydroxyethyl farnesyl side group. The sequence is that of Protoheme IX farnesyltransferase from Prochlorococcus marinus (strain NATL1A).